Consider the following 249-residue polypeptide: Triosephosphate isomerase (249 aa).

12–14 (NWK) lines the substrate pocket. His-96 (electrophile) is an active-site residue. The active-site Proton acceptor is Glu-166. Substrate is bound by residues Gly-172, Ser-211, and 232–233 (GG).

The protein belongs to the triosephosphate isomerase family. As to quaternary structure, homodimer.

The protein localises to the cytoplasm. It catalyses the reaction D-glyceraldehyde 3-phosphate = dihydroxyacetone phosphate. The protein operates within carbohydrate biosynthesis; gluconeogenesis. Its pathway is carbohydrate degradation; glycolysis; D-glyceraldehyde 3-phosphate from glycerone phosphate: step 1/1. In terms of biological role, involved in the gluconeogenesis. Catalyzes stereospecifically the conversion of dihydroxyacetone phosphate (DHAP) to D-glyceraldehyde-3-phosphate (G3P). The protein is Triosephosphate isomerase of Xanthobacter flavus.